Here is a 50-residue protein sequence, read N- to C-terminus: Insulin 2 (50 aa).

3 disulfide bridges follow: Cys8-Cys36, Cys20-Cys49, and Cys35-Cys40.

It belongs to the insulin family. Heterodimer of a B chain and an A chain linked by two disulfide bonds.

Its subcellular location is the secreted. Its function is as follows. Insulin decreases blood glucose concentration. It increases cell permeability to monosaccharides, amino acids and fatty acids. It accelerates glycolysis, the pentose phosphate cycle, and glycogen synthesis in liver. This chain is Insulin 2 (ins2), found in Batrachoididae sp. (Toadfish).